The sequence spans 357 residues: UDP-N-acetylglucosamine--N-acetylmuramyl-(pentapeptide) pyrophosphoryl-undecaprenol N-acetylglucosamine transferase (357 aa).

UDP-N-acetyl-alpha-D-glucosamine is bound by residues 13–15 (TGG), Asn122, Arg163, Ser191, and Gln288.

Belongs to the glycosyltransferase 28 family. MurG subfamily.

The protein resides in the cell inner membrane. The enzyme catalyses di-trans,octa-cis-undecaprenyl diphospho-N-acetyl-alpha-D-muramoyl-L-alanyl-D-glutamyl-meso-2,6-diaminopimeloyl-D-alanyl-D-alanine + UDP-N-acetyl-alpha-D-glucosamine = di-trans,octa-cis-undecaprenyl diphospho-[N-acetyl-alpha-D-glucosaminyl-(1-&gt;4)]-N-acetyl-alpha-D-muramoyl-L-alanyl-D-glutamyl-meso-2,6-diaminopimeloyl-D-alanyl-D-alanine + UDP + H(+). It functions in the pathway cell wall biogenesis; peptidoglycan biosynthesis. Functionally, cell wall formation. Catalyzes the transfer of a GlcNAc subunit on undecaprenyl-pyrophosphoryl-MurNAc-pentapeptide (lipid intermediate I) to form undecaprenyl-pyrophosphoryl-MurNAc-(pentapeptide)GlcNAc (lipid intermediate II). This Gloeobacter violaceus (strain ATCC 29082 / PCC 7421) protein is UDP-N-acetylglucosamine--N-acetylmuramyl-(pentapeptide) pyrophosphoryl-undecaprenol N-acetylglucosamine transferase.